Consider the following 428-residue polypeptide: Beta-1,3-galactosyl-O-glycosyl-glycoprotein beta-1,6-N-acetylglucosaminyltransferase 4 (428 aa).

The Cytoplasmic portion of the chain corresponds to 1–12 (MRRCAVLHRLRC). The chain crosses the membrane as a helical; Signal-anchor for type II membrane protein span at residues 13 to 30 (KFYVFVVSLFVVVKLVYL). Residues 31-428 (KISMDNSIYI…QLQQCLRRVS (398 aa)) are Lumenal-facing. Residue Asn59 is glycosylated (N-linked (GlcNAc...) asparagine). 4 disulfides stabilise this stretch: Cys60/Cys214, Cys148/Cys369, Cys169/Cys196, and Cys378/Cys410.

The protein belongs to the glycosyltransferase 14 family.

The protein resides in the golgi apparatus membrane. The enzyme catalyses a 3-O-[beta-D-galactosyl-(1-&gt;3)-N-acetyl-alpha-D-galactosaminyl]-L-seryl-[protein] + UDP-N-acetyl-alpha-D-glucosamine = 3-O-{beta-D-galactosyl-(1-&gt;3)-[N-acetyl-beta-D-glucosaminyl-(1-&gt;6)]-N-acetyl-alpha-D-galactosaminyl}-L-seryl-[protein] + UDP + H(+). The catalysed reaction is a 3-O-[beta-D-galactosyl-(1-&gt;3)-N-acetyl-alpha-D-galactosaminyl]-L-threonyl-[protein] + UDP-N-acetyl-alpha-D-glucosamine = a 3-O-{beta-D-galactosyl-(1-&gt;3)-[N-acetyl-beta-D-glucosaminyl-(1-&gt;6)]-N-acetyl-alpha-D-galactosaminyl}-L-threonyl-[protein] + UDP + H(+). Its pathway is protein modification; protein glycosylation. Its function is as follows. Glycosyltransferase that mediates core 2 O-glycan branching, an important step in mucin-type biosynthesis. The protein is Beta-1,3-galactosyl-O-glycosyl-glycoprotein beta-1,6-N-acetylglucosaminyltransferase 4 (gcnt4) of Danio rerio (Zebrafish).